A 455-amino-acid polypeptide reads, in one-letter code: Adenylyltransferase and sulfurtransferase MOCS3 (455 aa).

ATP contacts are provided by residues glycine 90, aspartate 111, 118–122 (SNLAR), lysine 135, and 179–180 (DN). The interval 156–236 (AQALTPATAL…QPPPAETVTN (81 aa)) is interaction with NFS1. Residues cysteine 220 and cysteine 223 each coordinate Zn(2+). The active-site Glycyl thioester intermediate; for adenylyltransferase activity is cysteine 237. Zn(2+)-binding residues include cysteine 295 and cysteine 298. Cysteine 314 and cysteine 322 are oxidised to a cystine. A Rhodanese domain is found at 345 to 453 (SGSPHLLLDV…WAAKVDGTFP (109 aa)). The active-site Cysteine persulfide intermediate; for sulfurtransferase activity is the cysteine 410. Cysteine persulfide is present on cysteine 410.

In the N-terminal section; belongs to the HesA/MoeB/ThiF family. UBA4 subfamily. As to quaternary structure, interacts with NFS1. It depends on Zn(2+) as a cofactor.

It localises to the cytoplasm. The protein localises to the cytosol. It catalyses the reaction [molybdopterin-synthase sulfur-carrier protein]-C-terminal Gly-Gly + ATP + H(+) = [molybdopterin-synthase sulfur-carrier protein]-C-terminal Gly-Gly-AMP + diphosphate. It carries out the reaction [molybdopterin-synthase sulfur-carrier protein]-C-terminal Gly-Gly-AMP + S-sulfanyl-L-cysteinyl-[cysteine desulfurase] + AH2 = [molybdopterin-synthase sulfur-carrier protein]-C-terminal-Gly-aminoethanethioate + L-cysteinyl-[cysteine desulfurase] + A + AMP + 2 H(+). Its pathway is tRNA modification; 5-methoxycarbonylmethyl-2-thiouridine-tRNA biosynthesis. It participates in cofactor biosynthesis; molybdopterin biosynthesis. Functionally, plays a central role in 2-thiolation of mcm(5)S(2)U at tRNA wobble positions of cytosolic tRNA(Lys), tRNA(Glu) and tRNA(Gln). Also essential during biosynthesis of the molybdenum cofactor. Acts by mediating the C-terminal thiocarboxylation of sulfur carriers URM1 and MOCS2A. Its N-terminus first activates URM1 and MOCS2A as acyl-adenylates (-COAMP), then the persulfide sulfur on the catalytic cysteine is transferred to URM1 and MOCS2A to form thiocarboxylation (-COSH) of their C-terminus. The reaction probably involves hydrogen sulfide that is generated from the persulfide intermediate and that acts as a nucleophile towards URM1 and MOCS2A. Subsequently, a transient disulfide bond is formed. Does not use thiosulfate as sulfur donor; NFS1 acting as a sulfur donor for thiocarboxylation reactions. This chain is Adenylyltransferase and sulfurtransferase MOCS3, found in Sus scrofa (Pig).